The primary structure comprises 268 residues: tRNA pseudouridine synthase A (268 aa).

Asp-52 functions as the Nucleophile in the catalytic mechanism. Tyr-113 lines the substrate pocket.

This sequence belongs to the tRNA pseudouridine synthase TruA family. As to quaternary structure, homodimer.

The catalysed reaction is uridine(38/39/40) in tRNA = pseudouridine(38/39/40) in tRNA. In terms of biological role, formation of pseudouridine at positions 38, 39 and 40 in the anticodon stem and loop of transfer RNAs. The sequence is that of tRNA pseudouridine synthase A from Chlamydia felis (strain Fe/C-56) (Chlamydophila felis).